The following is a 92-amino-acid chain: MLYLVRMDVNLPHDMPAAQADDIKAREKAYAQQLQHEGKWQQLYRVVGEYANYSIFDVGSHDELHTLLSGLPLFPYMKIHVTPLAKHPSSIR.

The protein belongs to the muconolactone Delta-isomerase family. As to quaternary structure, homodecamer.

It carries out the reaction (S)-muconolactone = (4,5-dihydro-5-oxofuran-2-yl)-acetate. It participates in aromatic compound metabolism; beta-ketoadipate pathway; 5-oxo-4,5-dihydro-2-furylacetate from catechol: step 3/3. This Cupriavidus pinatubonensis (strain JMP 134 / LMG 1197) (Cupriavidus necator (strain JMP 134)) protein is Muconolactone Delta-isomerase (catC).